A 527-amino-acid chain; its full sequence is Laccase-5 (527 aa).

The N-terminal stretch at 1–23 (MGKFHSFVNVVALSLSLSGRVFG) is a signal peptide. One can recognise a Plastocyanin-like 1 domain in the interval 25 to 150 (IGPVTDLTIS…DGLRGPLVVY (126 aa)). Residues N74 and N77 are each glycosylated (N-linked (GlcNAc...) asparagine). Residues H87, H89, H132, and H134 each coordinate Cu cation. Cystine bridges form between C108–C516 and C140–C230. 10 N-linked (GlcNAc...) asparagine glycosylation sites follow: N156, N209, N233, N242, N276, N317, N358, N366, N393, and N402. The 145-residue stretch at 162–306 (VDDDTTVITL…GGVNSAILRY (145 aa)) folds into the Plastocyanin-like 2 domain. One can recognise a Plastocyanin-like 3 domain in the interval 373–498 (TVPVLLQILS…AGFAIVFAED (126 aa)). Cu cation is bound by residues H425, H428, H430, H480, C481, H482, and H486.

Belongs to the multicopper oxidase family. The cofactor is Cu cation.

It localises to the secreted. The catalysed reaction is 4 hydroquinone + O2 = 4 benzosemiquinone + 2 H2O. Its function is as follows. Lignin degradation and detoxification of lignin-derived products. This Trametes versicolor (White-rot fungus) protein is Laccase-5 (LCC5).